Here is a 387-residue protein sequence, read N- to C-terminus: Delta(12)-acyl-lipid-desaturase (387 aa).

Residues 1–31 (MGAGGRMTVPNKWEGEGDEKSQKPVQRVPSA) form a disordered region. Positions 13–22 (WEGEGDEKSQ) are enriched in basic and acidic residues. The next 2 membrane-spanning stretches (helical) occupy residues 58-78 (SYVL…TTYI) and 88-108 (AAWP…WVIA). Positions 109–113 (HECGH) match the Histidine box-1 motif. A helical membrane pass occupies residues 121-141 (WVDDCVGLVLHSALLVPYFSW). Residues 145-149 (HRRHH) carry the Histidine box-2 motif. 3 helical membrane-spanning segments follow: residues 183–203 (VMTL…LNVS), 229–249 (IYIS…IAAA), and 251–271 (GLAW…AFLV). The Histidine box-3 signature appears at 319-323 (HVAHH).

The protein belongs to the fatty acid desaturase type 1 family.

It localises to the membrane. It functions in the pathway lipid metabolism; polyunsaturated fatty acid biosynthesis. In terms of biological role, delta(12)-fatty acid desaturase producing in a heterologous system linoleic acid (18:2(9Z,12Z)) and to a lower extent hexadecadienoic acid (16:2(9Z,12Z)). The polypeptide is Delta(12)-acyl-lipid-desaturase (Punica granatum (Pomegranate)).